The following is a 63-amino-acid chain: Small ribosomal subunit protein eS17 (63 aa).

It belongs to the eukaryotic ribosomal protein eS17 family.

In Methanococcus maripaludis (strain C6 / ATCC BAA-1332), this protein is Small ribosomal subunit protein eS17.